The chain runs to 323 residues: Fructose-bisphosphate aldolase (323 aa).

Residue serine 50 coordinates beta-D-fructose 1,6-bisphosphate. Aspartate 83 acts as the Proton donor in catalysis. Histidine 84 and histidine 178 together coordinate Zn(2+). Beta-D-fructose 1,6-bisphosphate is bound by residues histidine 178, glycine 179, and lysine 182. Position 210 (histidine 210) interacts with Zn(2+). Beta-D-fructose 1,6-bisphosphate is bound by residues glycine 211, serine 213, asparagine 253, aspartate 255, serine 256, arginine 259, and arginine 280.

The protein belongs to the class II fructose-bisphosphate aldolase family. In terms of assembly, homodimer. Zn(2+) serves as cofactor.

It carries out the reaction beta-D-fructose 1,6-bisphosphate = D-glyceraldehyde 3-phosphate + dihydroxyacetone phosphate. Its pathway is carbohydrate degradation; glycolysis; D-glyceraldehyde 3-phosphate and glycerone phosphate from D-glucose: step 4/4. Its function is as follows. Plays a key role in glycolysis by catalyzing the cleavage of fructose 1,6-bisphosphate into dihydroxyacetone phosphate and glyceraldehyde 3-phosphate. Does not cleave D-tagatose-1,6-bisphosphate. This chain is Fructose-bisphosphate aldolase, found in Giardia intestinalis (strain ATCC 50803 / WB clone C6) (Giardia lamblia).